The primary structure comprises 126 residues: Large ribosomal subunit protein eL8 (126 aa).

Belongs to the eukaryotic ribosomal protein eL8 family. In terms of assembly, part of the 50S ribosomal subunit. Probably part of the RNase P complex.

Its subcellular location is the cytoplasm. Functionally, multifunctional RNA-binding protein that recognizes the K-turn motif in ribosomal RNA, the RNA component of RNase P, box H/ACA, box C/D and box C'/D' sRNAs. The chain is Large ribosomal subunit protein eL8 from Cenarchaeum symbiosum (strain A).